The primary structure comprises 115 residues: U3-lycotoxin-Ls1k (115 aa).

An N-terminal signal peptide occupies residues 1 to 20; that stretch reads MKFVLLFGVLVVTLFSYSSA. Residues 21–44 constitute a propeptide that is removed on maturation; sequence EMLDDFDQADEDELLSLIEKEEAR. Disulfide bonds link C48–C63, C55–C72, C62–C87, and C74–C85.

The protein belongs to the neurotoxin 19 (CSTX) family. 01 subfamily. Expressed by the venom gland.

Its subcellular location is the secreted. This is U3-lycotoxin-Ls1k from Lycosa singoriensis (Wolf spider).